The chain runs to 1111 residues: Histone deacetylase 5 (1111 aa).

Residue K35 forms a Glycyl lysine isopeptide (Lys-Gly) (interchain with G-Cter in SUMO2) linkage. 3 disordered regions span residues 40–63 (GAMPSSMGGGGGGSPSPVELRGAL), 107–136 (RQHEVQLQKHLKQQQEMLAAKRQQELEQQR), and 187–272 (KEPT…SSPL). The span at 238 to 249 (DSRDDFPLRKTA) shows a compositional bias: basic and acidic residues. Residue S250 is modified to Phosphoserine; by AMPK, CaMK1, SIK1 and PKD/PRKD1. A compositionally biased stretch (basic and acidic residues) spans 263 to 272 (KVAERRSSPL). T283 bears the Phosphothreonine; by PKC mark. The segment at 474-495 (TVGKLPRHRPLSRTQSSPLPQS) is disordered. Residues 485-495 (SRTQSSPLPQS) show a composition bias toward low complexity. S489 carries the post-translational modification Phosphoserine; by AMPK, CaMK1, SIK1 and PKD/PRKD1. K524 is modified (N6-acetyllysine). Disordered stretches follow at residues 527–611 (TKTG…LEES) and 645–666 (LGRTQSSPAAPGSMKSPPDQPT). A compositionally biased stretch (acidic residues) spans 572–610 (STQEDLEEEEDEEEEDEDCIQVKDEEGESGPDEGPDLEE). S600 and S650 each carry phosphoserine. The segment at 671–1017 (TTGVVYDTFM…VSALLSVELQ (347 aa)) is histone deacetylase. Residues C685, C687, H693, and C770 each coordinate Zn(2+). The active site involves H822. The Nuclear export signal motif lies at 1070–1109 (EEAETVSAMALLSVGAEQAQAVATQEHSPRPAEEPMEQEP). Residues 1086–1111 (EQAQAVATQEHSPRPAEEPMEQEPTL) form a disordered region. The residue at position 1097 (S1097) is a Phosphoserine.

This sequence belongs to the histone deacetylase family. HD type 2 subfamily. In terms of assembly, interacts with AHRR, BAHD1, BCOR, HDAC7, HDAC9, CTBP1, MEF2C, NCOR2, NRIP1, PHB2 and a 14-3-3 chaperone protein. Interacts with BCL6, DDIT3/CHOP, GRK5, KDM5B and MYOCD. Interacts with EP300 in the presence of TFAP2C. Interacts with ANKRA2. Interacts with CUL7 (as part of the 3M complex); negatively regulated by ANKRA2. Interacts with ZBTB7B; the interaction allows the recruitment of HDAC4 on CD8 loci for deacetylation and possible inhibition of CD8 genes expression. Interacts with RARA. Phosphorylated by AMPK, CaMK1, SIK1 and PRKD1 at Ser-250 and Ser-489. The phosphorylation is required for the export to the cytoplasm and inhibition. Phosphorylated by the PKC kinases PKN1 and PKN2, impairing nuclear import. Phosphorylated by GRK5, leading to nuclear export of HDAC5 and allowing MEF2-mediated transcription. In terms of processing, ubiquitinated. Polyubiquitination however does not lead to its degradation.

It is found in the nucleus. It localises to the cytoplasm. The enzyme catalyses N(6)-acetyl-L-lysyl-[histone] + H2O = L-lysyl-[histone] + acetate. In terms of biological role, responsible for the deacetylation of lysine residues on the N-terminal part of the core histones (H2A, H2B, H3 and H4). Histone deacetylation gives a tag for epigenetic repression and plays an important role in transcriptional regulation, cell cycle progression and developmental events. Histone deacetylases act via the formation of large multiprotein complexes. Involved in muscle maturation by repressing transcription of myocyte enhancer MEF2C. During muscle differentiation, it shuttles into the cytoplasm, allowing the expression of myocyte enhancer factors. Serves as a corepressor of RARA and causes its deacetylation. In association with RARA, plays a role in the repression of microRNA-10a and thereby in the inflammatory response. The protein is Histone deacetylase 5 (HDAC5) of Cricetulus griseus (Chinese hamster).